The primary structure comprises 382 residues: MKITRLTTYRLPPRWMFLKVETDEGVTGWGEPVIEGRARTVEAAVHELSDYLIGQDPSRINDLWQTMYRAGFYRGGPILMSAIAGIDQALWDIKGKVLGVPVYELLGGLVRDKMRTYSWVGGDRPADVIAGMKALQAGGFDHFKLNGCEEMGIIDTSRAVDAAVARVAEIRSAFGNTVEFGLDFHGRVSAPMAKVLIKELEPYRPLFIEEPVLAEQAETYARLAAHTHLPIAAGERMFSRFDFKRVLEAGGVSILQPDLSHAGGITECVKIAAMAEAYDVALAPHCPLGPIALAACLHVDFVSWNATLQEQSMGIHYNKGAELLDYVRNKADFALEGGYIRPPRLPGLGVDIDEALVIERSKEAPDWRNPVWRHADGSVAEW.

Residue Asp183 participates in Mg(2+) binding. The Proton donor role is filled by His185. Mg(2+) is bound by residues Glu209 and Glu235. The Proton acceptor role is filled by His285.

It belongs to the mandelate racemase/muconate lactonizing enzyme family. GalD subfamily. Mg(2+) serves as cofactor.

It catalyses the reaction D-galactonate = 2-dehydro-3-deoxy-D-galactonate + H2O. It functions in the pathway carbohydrate acid metabolism; D-galactonate degradation; D-glyceraldehyde 3-phosphate and pyruvate from D-galactonate: step 1/3. Its function is as follows. Catalyzes the dehydration of D-galactonate to 2-keto-3-deoxy-D-galactonate. This Ralstonia pickettii (strain 12J) protein is D-galactonate dehydratase.